Consider the following 340-residue polypeptide: Probable dual-specificity RNA methyltransferase RlmN (340 aa).

Glu-90 functions as the Proton acceptor in the catalytic mechanism. Residues 97–325 enclose the Radical SAM core domain; the sequence is QVSRKTACLS…PVTRRYQRGN (229 aa). Cysteines 104 and 331 form a disulfide. [4Fe-4S] cluster-binding residues include Cys-111, Cys-115, and Cys-118. S-adenosyl-L-methionine contacts are provided by residues 157-158, Ser-189, 212-214, and Asn-288; these read GE and SLT. Cys-331 functions as the S-methylcysteine intermediate in the catalytic mechanism.

The protein belongs to the radical SAM superfamily. RlmN family. Requires [4Fe-4S] cluster as cofactor.

It localises to the cytoplasm. The enzyme catalyses adenosine(2503) in 23S rRNA + 2 reduced [2Fe-2S]-[ferredoxin] + 2 S-adenosyl-L-methionine = 2-methyladenosine(2503) in 23S rRNA + 5'-deoxyadenosine + L-methionine + 2 oxidized [2Fe-2S]-[ferredoxin] + S-adenosyl-L-homocysteine. The catalysed reaction is adenosine(37) in tRNA + 2 reduced [2Fe-2S]-[ferredoxin] + 2 S-adenosyl-L-methionine = 2-methyladenosine(37) in tRNA + 5'-deoxyadenosine + L-methionine + 2 oxidized [2Fe-2S]-[ferredoxin] + S-adenosyl-L-homocysteine. Functionally, specifically methylates position 2 of adenine 2503 in 23S rRNA and position 2 of adenine 37 in tRNAs. In Treponema pallidum (strain Nichols), this protein is Probable dual-specificity RNA methyltransferase RlmN.